Reading from the N-terminus, the 119-residue chain is Large ribosomal subunit protein bL19 (119 aa).

It belongs to the bacterial ribosomal protein bL19 family.

This protein is located at the 30S-50S ribosomal subunit interface and may play a role in the structure and function of the aminoacyl-tRNA binding site. This chain is Large ribosomal subunit protein bL19, found in Arthrobacter sp. (strain FB24).